The chain runs to 144 residues: IgW chain C region, secreted form 1/3 (144 aa).

The region spanning 1–82 is the Ig-like domain; the sequence is VYNQTTAVLG…AGSRFNDRIS (82 aa). 3 N-linked (GlcNAc...) asparagine glycosylation sites follow: Asn3, Asn43, and Asn123. A disulfide bridge connects residues Cys11 and Cys68. Positions 87 to 144 are secretory tail; sequence KGGTINLPVPGGNTPCTCPPCSCSGCMPKLVYQTDLNVTLENGGQLQYNCHQQACKIK.

Expressed mainly in lymphoid tissues including spleen, epigonal organ and circulating lymphocytes.

The protein localises to the secreted. The polypeptide is IgW chain C region, secreted form 1/3 (Heterodontus francisci (Horn shark)).